A 346-amino-acid polypeptide reads, in one-letter code: Fe(3+) ions import ATP-binding protein FbpC 3 (346 aa).

The region spanning 5 to 235 (LEVDGVDKSF…PIDVATAEFI (231 aa)) is the ABC transporter domain. 37–44 (GPSGCGKT) provides a ligand contact to ATP.

It belongs to the ABC transporter superfamily. Fe(3+) ion importer (TC 3.A.1.10) family. In terms of assembly, the complex is composed of two ATP-binding proteins (FbpC), two transmembrane proteins (FbpB) and a solute-binding protein (FbpA).

It is found in the cell membrane. The enzyme catalyses Fe(3+)(out) + ATP + H2O = Fe(3+)(in) + ADP + phosphate + H(+). Functionally, part of the ABC transporter complex FbpABC involved in Fe(3+) ions import. Responsible for energy coupling to the transport system. This is Fe(3+) ions import ATP-binding protein FbpC 3 from Rhodococcus jostii (strain RHA1).